The following is a 130-amino-acid chain: Methylglyoxal synthase (130 aa).

Residues 1 to 130 form the MGS-like domain; the sequence is MSKPRIALIA…DLARNMQDVC (130 aa). Residues His-11, Lys-15, 37 to 40, and 57 to 58 contribute to the substrate site; these read TGTT and SG. The active-site Proton donor/acceptor is Asp-63. Residue His-90 participates in substrate binding.

It belongs to the methylglyoxal synthase family.

It catalyses the reaction dihydroxyacetone phosphate = methylglyoxal + phosphate. Catalyzes the formation of methylglyoxal from dihydroxyacetone phosphate. The sequence is that of Methylglyoxal synthase from Burkholderia ambifaria (strain MC40-6).